Reading from the N-terminus, the 396-residue chain is (S)-8-oxocitronellyl enol synthase ISY2 (396 aa).

Residues 38 to 40 (TGL), 66 to 67 (RR), 84 to 85 (DV), 108 to 109 (TW), glutamine 146, tyrosine 182, isoleucine 209, and 216 to 218 (SMM) contribute to the NADP(+) site. Tyrosine 182 is an active-site residue.

Belongs to the short-chain dehydrogenases/reductases (SDR) family.

It carries out the reaction (S)-8-oxocitronellyl enol + NADP(+) = (6E)-8-oxogeranial + NADPH + H(+). The enzyme catalyses (S)-8-oxocitronellyl enol + NAD(+) = (6E)-8-oxogeranial + NADH + H(+). Its function is as follows. Iridoid synthase that catalyzes the first step in generation of the iridoid ring scaffold using the linear monoterpene (6E)-8-oxogeranial as substrate. Iridoids comprise a large family of distinctive bicyclic monoterpenes that possess a wide range of pharmacological activities, including anticancer, anti-inflammatory, antifungal and antibacterial activities. Catalyzes the conversion of the linear monoterpene (6E)-8-oxogeranial to (S)-8-oxocitronellyl enol, a precursor of nepetalactones, which are metabolites that are both insect-repellent and have euphoric effect in cats. The sequence is that of (S)-8-oxocitronellyl enol synthase ISY2 from Nepeta racemosa (Catmint).